Reading from the N-terminus, the 298-residue chain is MKYLLDLILLLPLLIVFCIESFIKRLIPKKKKSVAGEIVLITGAGHGIGRLTAYEFAKLNTKLVLWDINKNGIEETAAKCRKLGAQVHPFVVDCSQREEIYSAVRKVKEEVGDVSILVNNAGVVYTADLFATQDPQIEKTFEVNVLAHFWTTKAFLPAMMKNNHGHVVTVASAAGHTVVPFLLAYCSSKFAAVGFHRALTDELAALGCTGVRTSCLCPNFINTGFIKNPSTNLGPTLEPEEVVEHLMHGILTNQKMIFVPGSIALLTVLERVFPERFLDVLKRRINVKFDAVVGYKDK.

A signal peptide spans 1-21 (MKYLLDLILLLPLLIVFCIES). An NADP(+)-binding site is contributed by 40–64 (LITGAGHGIGRLTAYEFAKLNTKLV). A substrate-binding site is contributed by Ser172. Tyr185 (proton acceptor) is an active-site residue.

This sequence belongs to the short-chain dehydrogenases/reductases (SDR) family. 17-beta-HSD 3 subfamily.

The protein resides in the endoplasmic reticulum. The protein localises to the lipid droplet. It carries out the reaction 17beta-estradiol + NAD(+) = estrone + NADH + H(+). The catalysed reaction is 17beta-estradiol + NADP(+) = estrone + NADPH + H(+). Can convert androstan-3-alpha,17-beta-diol (3-alpha-diol) to androsterone in vitro, suggesting that it may participate in androgen metabolism during steroidogenesis. May act by metabolizing compounds that stimulate steroid synthesis and/or by generating metabolites that inhibit it. Has no activity toward DHEA (dehydroepiandrosterone), or A-dione (4-androste-3,17-dione), and only a slight activity toward testosterone to A-dione. The protein is Estradiol 17-beta-dehydrogenase 11 (Hsd17b11) of Rattus norvegicus (Rat).